The chain runs to 144 residues: MRLNTLSPAEGAKHSAKRLGRGIGSGLGKTGGRGHKGQKSRTGSGVRRGFEGGQMPLYRRLPKFGFTSMKSAVTAEVRLNELTKVEGNVVTLETLKAANILTKDIQFAKVILAGEVKSAVTVRGLRVTKGAKAAIEAAGGSIEE.

The tract at residues 1–52 is disordered; the sequence is MRLNTLSPAEGAKHSAKRLGRGIGSGLGKTGGRGHKGQKSRTGSGVRRGFEG. Residues 21-31 are compositionally biased toward gly residues; sequence RGIGSGLGKTG.

Belongs to the universal ribosomal protein uL15 family. In terms of assembly, part of the 50S ribosomal subunit.

In terms of biological role, binds to the 23S rRNA. In Haemophilus influenzae (strain 86-028NP), this protein is Large ribosomal subunit protein uL15.